The primary structure comprises 89 residues: Small ribosomal subunit protein uS15 (89 aa).

Belongs to the universal ribosomal protein uS15 family. In terms of assembly, part of the 30S ribosomal subunit. Forms a bridge to the 50S subunit in the 70S ribosome, contacting the 23S rRNA.

Its function is as follows. One of the primary rRNA binding proteins, it binds directly to 16S rRNA where it helps nucleate assembly of the platform of the 30S subunit by binding and bridging several RNA helices of the 16S rRNA. Functionally, forms an intersubunit bridge (bridge B4) with the 23S rRNA of the 50S subunit in the ribosome. The chain is Small ribosomal subunit protein uS15 from Salinispora tropica (strain ATCC BAA-916 / DSM 44818 / JCM 13857 / NBRC 105044 / CNB-440).